The chain runs to 125 residues: Histone H2A (125 aa).

Over residues 1 to 18 (MSGRGKGGKARAKAKSRS) the composition is skewed to basic residues. The tract at residues 1–21 (MSGRGKGGKARAKAKSRSSRA) is disordered. Serine 2 is modified (N-acetylserine). Phosphoserine is present on serine 2. The residue at position 104 (glutamine 104) is an N5-methylglutamine.

It belongs to the histone H2A family. In terms of assembly, the nucleosome is a histone octamer containing two molecules each of H2A, H2B, H3 and H4 assembled in one H3-H4 heterotetramer and two H2A-H2B heterodimers. The octamer wraps approximately 147 bp of DNA.

The protein localises to the nucleus. Its subcellular location is the chromosome. In terms of biological role, core component of nucleosome. Nucleosomes wrap and compact DNA into chromatin, limiting DNA accessibility to the cellular machineries which require DNA as a template. Histones thereby play a central role in transcription regulation, DNA repair, DNA replication and chromosomal stability. DNA accessibility is regulated via a complex set of post-translational modifications of histones, also called histone code, and nucleosome remodeling. This Asterias rubens (Common European starfish) protein is Histone H2A.